We begin with the raw amino-acid sequence, 318 residues long: NADH-ubiquinone oxidoreductase chain 1 (318 aa).

A run of 8 helical transmembrane segments spans residues 2–22, 70–90, 100–120, 146–166, 171–191, 222–242, 253–273, and 294–314; these read FTIN…FLTL, MFII…VPLP, LGVL…LWSG, LAII…STLI, HLWL…STLA, LFFM…TILF, ELYT…FLWI, and LPLT…MSSI.

It belongs to the complex I subunit 1 family.

The protein resides in the mitochondrion inner membrane. The catalysed reaction is a ubiquinone + NADH + 5 H(+)(in) = a ubiquinol + NAD(+) + 4 H(+)(out). Functionally, core subunit of the mitochondrial membrane respiratory chain NADH dehydrogenase (Complex I) that is believed to belong to the minimal assembly required for catalysis. Complex I functions in the transfer of electrons from NADH to the respiratory chain. The immediate electron acceptor for the enzyme is believed to be ubiquinone. This Rhinoceros unicornis (Greater Indian rhinoceros) protein is NADH-ubiquinone oxidoreductase chain 1 (MT-ND1).